Consider the following 167-residue polypeptide: Swarming motility protein SwrB (167 aa).

Residues 63–105 form a disordered region; the sequence is IENKASSASQSDEESQKSGLQTSETYQERDPVQEAENLPEHIE. A compositionally biased stretch (basic and acidic residues) spans 88–105; the sequence is YQERDPVQEAENLPEHIE.

Functionally, required for swarming motility and for maximal sigma-D activity. This chain is Swarming motility protein SwrB (swrB), found in Bacillus subtilis (strain 168).